We begin with the raw amino-acid sequence, 309 residues long: Foldase protein PrsA 2 (309 aa).

Residues 1–22 (MKQMNKLITGVVTLATVVTLSA) form the signal peptide. Cysteine 23 carries N-palmitoyl cysteine lipidation. The S-diacylglycerol cysteine moiety is linked to residue cysteine 23. The region spanning 146–241 (TPTMTAEIMQ…RTYHIIKVTK (96 aa)) is the PpiC domain.

This sequence belongs to the PrsA family.

It localises to the cell membrane. It catalyses the reaction [protein]-peptidylproline (omega=180) = [protein]-peptidylproline (omega=0). In terms of biological role, plays a major role in protein secretion by helping the post-translocational extracellular folding of several secreted proteins. This Streptococcus pyogenes serotype M1 protein is Foldase protein PrsA 2 (prsA2).